Consider the following 105-residue polypeptide: Putative membrane protein insertion efficiency factor (105 aa).

Belongs to the UPF0161 family.

The protein localises to the cell inner membrane. Functionally, could be involved in insertion of integral membrane proteins into the membrane. This is Putative membrane protein insertion efficiency factor from Nitratidesulfovibrio vulgaris (strain DSM 19637 / Miyazaki F) (Desulfovibrio vulgaris).